Here is a 506-residue protein sequence, read N- to C-terminus: MTEHLPTSQVSFDENALIAERRAKLLALRAQGVAYPNDVKREHYAADVQVAFANVETWTAEALEASGDRVRMAGRLMAKRLMGKASFAQIQDESGRIQLLIQSNVLGEDSYAAFKVLDVGDIIAVEGGLTRTRTGELSVKVNVLRLLTKALRPLPDKWHGLTDVEQRYRQRYVDLIVTPESREIFIKRSKIIRALRTWLDARLFLEVETPMMHYIPGGAAAKPFVTYHNALDLELYLRVAPELYLKRLVVGGLERVYEINRNFRNEGVSTRHNPEFTMLELYEAYSTYHEVMDLAETMIRDTAQSVLGTTQVIWDGAQIDLGPIFRRWRMDEAVCHHNPEISVAECTDRDALLLHCERLKIKVKSSYGWGRLLLSIFEATVEHTLIQPTFITDHPVEISPLARESDIEPGYTDRFELFINGKEIANGFSELNDPEEQAMRFQKQVEAKEGGDDEAMYYDADYIRALEYGMAPTGGLGIGVDRLVMLLTGSTSIRDVLLFPYMRPER.

Residues E416 and E423 each contribute to the Mg(2+) site.

It belongs to the class-II aminoacyl-tRNA synthetase family. As to quaternary structure, homodimer. The cofactor is Mg(2+).

The protein resides in the cytoplasm. The enzyme catalyses tRNA(Lys) + L-lysine + ATP = L-lysyl-tRNA(Lys) + AMP + diphosphate. This is Lysine--tRNA ligase (lysS) from Xylella fastidiosa (strain 9a5c).